Reading from the N-terminus, the 187-residue chain is Flavin prenyltransferase UbiX (187 aa).

FMN is bound by residues 9 to 11, S34, and R123; that span reads GAS. Dimethylallyl phosphate-binding residues include Y153 and K169.

Belongs to the UbiX/PAD1 family.

It carries out the reaction dimethylallyl phosphate + FMNH2 = prenylated FMNH2 + phosphate. Functionally, flavin prenyltransferase that catalyzes the synthesis of the prenylated FMN cofactor (prenyl-FMN) for 4-hydroxy-3-polyprenylbenzoic acid decarboxylase UbiD. The prenyltransferase is metal-independent and links a dimethylallyl moiety from dimethylallyl monophosphate (DMAP) to the flavin N5 and C6 atoms of FMN. In Helicobacter pylori (strain J99 / ATCC 700824) (Campylobacter pylori J99), this protein is Flavin prenyltransferase UbiX.